Consider the following 144-residue polypeptide: Prefoldin subunit alpha (144 aa).

It belongs to the prefoldin alpha subunit family. As to quaternary structure, heterohexamer of two alpha and four beta subunits.

Its subcellular location is the cytoplasm. In terms of biological role, molecular chaperone capable of stabilizing a range of proteins. Seems to fulfill an ATP-independent, HSP70-like function in archaeal de novo protein folding. The polypeptide is Prefoldin subunit alpha (Methanococcus maripaludis (strain C5 / ATCC BAA-1333)).